Consider the following 154-residue polypeptide: UPF0127 protein TSIB_1463 (154 aa).

It belongs to the UPF0127 family.

This is UPF0127 protein TSIB_1463 from Thermococcus sibiricus (strain DSM 12597 / MM 739).